The chain runs to 183 residues: Dual-action ribosomal maturation protein DarP (183 aa).

The protein belongs to the DarP family.

The protein resides in the cytoplasm. In terms of biological role, member of a network of 50S ribosomal subunit biogenesis factors which assembles along the 30S-50S interface, preventing incorrect 23S rRNA structures from forming. Promotes peptidyl transferase center (PTC) maturation. In Salmonella arizonae (strain ATCC BAA-731 / CDC346-86 / RSK2980), this protein is Dual-action ribosomal maturation protein DarP.